The following is a 177-amino-acid chain: Small ribosomal subunit protein uS5 (177 aa).

Residues 14 to 77 (LQEKLITVNR…EKARHNMIDI (64 aa)) enclose the S5 DRBM domain.

The protein belongs to the universal ribosomal protein uS5 family. As to quaternary structure, part of the 30S ribosomal subunit. Contacts proteins S4 and S8.

In terms of biological role, with S4 and S12 plays an important role in translational accuracy. Located at the back of the 30S subunit body where it stabilizes the conformation of the head with respect to the body. This is Small ribosomal subunit protein uS5 from Blochmanniella floridana.